The sequence spans 158 residues: SsrA-binding protein (158 aa).

Belongs to the SmpB family.

It is found in the cytoplasm. In terms of biological role, required for rescue of stalled ribosomes mediated by trans-translation. Binds to transfer-messenger RNA (tmRNA), required for stable association of tmRNA with ribosomes. tmRNA and SmpB together mimic tRNA shape, replacing the anticodon stem-loop with SmpB. tmRNA is encoded by the ssrA gene; the 2 termini fold to resemble tRNA(Ala) and it encodes a 'tag peptide', a short internal open reading frame. During trans-translation Ala-aminoacylated tmRNA acts like a tRNA, entering the A-site of stalled ribosomes, displacing the stalled mRNA. The ribosome then switches to translate the ORF on the tmRNA; the nascent peptide is terminated with the 'tag peptide' encoded by the tmRNA and targeted for degradation. The ribosome is freed to recommence translation, which seems to be the essential function of trans-translation. This chain is SsrA-binding protein, found in Parafrankia sp. (strain EAN1pec).